The sequence spans 221 residues: Vacuolar protein sorting-associated protein 20 (221 aa).

A lipid anchor (N-myristoyl glycine) is attached at Gly2. The stretch at 72–178 forms a coiled coil; sequence QEHLLQQASD…LNPEKMNNAK (107 aa). Residues 170-221 are disordered; the sequence is NPEKMNNAKVANMPSTEGLPSLPQGEQTEQKEREEFATEERSDTKEPLALLS. Residues 197 to 215 show a composition bias toward basic and acidic residues; the sequence is TEQKEREEFATEERSDTKE.

This sequence belongs to the SNF7 family. In terms of assembly, core component of the ESCRT-III complex (endosomal sorting required for transport complex III). ESCRT-III appears to be sequentially assembled as a flat lattice on the endosome membrane and forms a transient 450 kDa complex that contains DID4, oligomerized SNF7, VPS20 and VPS24. SNF7 oligomerization into a membrane-associated filament is nucleated by association of SNF7 with VPS20; the process is terminated through association of VPS24, possibly by capping the SNF7 filament. VPS24 subsequently associates with DID4/VPS2. Interacts with the VPS4. Interacts with VPS25; the interaction mediates the association with the ESCRT-II complex.

The protein localises to the endosome membrane. The protein resides in the vacuole membrane. In terms of biological role, class E VPS protein implicated in concentration and sorting of cargo proteins of the multivesicular body (MVB) for incorporation into intralumenal vesicles. The lumenal sequestrated membrane proteins will be targeted into the vacuole after fusion of the endosome with the vacuole. Acts a component of the ESCRT-III complex, which appears to be critical for late steps in MVB sorting, such as membrane invagination and final cargo sorting and recruitment of late-acting components of the sorting machinery. The MVB pathway requires the sequential function of ESCRT-O, -I,-II and -III complex assemblies. Required for the oligomerization of SNF7 into a membrane-associated filament. The VPS20-SNF7 subcomplex is responsible for the membrane association of the ESCRT-III complex. Also required for the RIM101 repressor proteolytic activation. The polypeptide is Vacuolar protein sorting-associated protein 20 (VPS20) (Saccharomyces cerevisiae (strain ATCC 204508 / S288c) (Baker's yeast)).